Here is a 181-residue protein sequence, read N- to C-terminus: Acireductone dioxygenase (181 aa).

The Fe(2+) site is built by H97, H99, E103, and H141. Ni(2+) contacts are provided by H97, H99, E103, and H141.

Belongs to the acireductone dioxygenase (ARD) family. Monomer. It depends on Fe(2+) as a cofactor. Ni(2+) serves as cofactor.

It carries out the reaction 1,2-dihydroxy-5-(methylsulfanyl)pent-1-en-3-one + O2 = 3-(methylsulfanyl)propanoate + CO + formate + 2 H(+). The catalysed reaction is 1,2-dihydroxy-5-(methylsulfanyl)pent-1-en-3-one + O2 = 4-methylsulfanyl-2-oxobutanoate + formate + 2 H(+). Its pathway is amino-acid biosynthesis; L-methionine biosynthesis via salvage pathway; L-methionine from S-methyl-5-thio-alpha-D-ribose 1-phosphate: step 5/6. Functionally, catalyzes 2 different reactions between oxygen and the acireductone 1,2-dihydroxy-3-keto-5-methylthiopentene (DHK-MTPene) depending upon the metal bound in the active site. Fe-containing acireductone dioxygenase (Fe-ARD) produces formate and 2-keto-4-methylthiobutyrate (KMTB), the alpha-ketoacid precursor of methionine in the methionine recycle pathway. Ni-containing acireductone dioxygenase (Ni-ARD) produces methylthiopropionate, carbon monoxide and formate, and does not lie on the methionine recycle pathway. The chain is Acireductone dioxygenase from Pseudomonas fluorescens (strain Pf0-1).